The sequence spans 340 residues: GTPase Obg (340 aa).

The 161-residue stretch at 1 to 161 folds into the Obg domain; it reads MKFVDMTNIT…QHLLLELLLI (161 aa). The region spanning 162–335 is the OBG-type G domain; that stretch reads ANVGIFGLPN…LCNSIMKFIM (174 aa). GTP is bound by residues 168-175, 193-197, 215-218, 285-288, and 316-318; these read GLPNSGKS, FTTLV, DIPG, NKID, and SSI. Positions 175 and 195 each coordinate Mg(2+).

It belongs to the TRAFAC class OBG-HflX-like GTPase superfamily. OBG GTPase family. In terms of assembly, monomer. Mg(2+) is required as a cofactor.

It is found in the cytoplasm. Functionally, an essential GTPase which binds GTP, GDP and possibly (p)ppGpp with moderate affinity, with high nucleotide exchange rates and a fairly low GTP hydrolysis rate. Plays a role in control of the cell cycle, stress response, ribosome biogenesis and in those bacteria that undergo differentiation, in morphogenesis control. The sequence is that of GTPase Obg from Blochmanniella pennsylvanica (strain BPEN).